The chain runs to 369 residues: Thyroid hormone receptor beta (369 aa).

The tract at residues 1-14 is modulating; sequence MSGYIPSYLDKDEL. Zn(2+) is bound by residues cysteine 15, cysteine 18, cysteine 32, cysteine 35, cysteine 53, cysteine 59, cysteine 69, and cysteine 72. 2 consecutive NR C4-type zinc fingers follow at residues 15–35 and 53–77; these read CVVC…CEGC and CKYE…FKKC. Residues 15–89 constitute a DNA-binding region (nuclear receptor); the sequence is CVVCGDKATG…VGMATDLVLD (75 aa). An NR LBD domain is found at 125-369; the sequence is EEWELIKIVT…PPLFLEVFED (245 aa). 3,3',5-triiodo-L-thyronine-binding residues include arginine 190, asparagine 239, and histidine 343. Residues arginine 190, asparagine 239, and histidine 343 each coordinate L-thyroxine.

This sequence belongs to the nuclear hormone receptor family. NR1 subfamily.

Its subcellular location is the nucleus. In terms of biological role, nuclear hormone receptor that can act as a repressor or activator of transcription. High affinity receptor for thyroid hormones, including triiodothyronine and thyroxine. The sequence is that of Thyroid hormone receptor beta (THRB) from Cairina moschata (Muscovy duck).